A 526-amino-acid chain; its full sequence is Lysine--tRNA ligase (526 aa).

Positions 44–52 match the 'HIGH' region motif; sequence PSGLPHIGT. The 'KMSKS' region signature appears at 290 to 294; sequence KISKS. Residue K293 coordinates ATP.

It belongs to the class-I aminoacyl-tRNA synthetase family.

Its subcellular location is the cytoplasm. The catalysed reaction is tRNA(Lys) + L-lysine + ATP = L-lysyl-tRNA(Lys) + AMP + diphosphate. In Rickettsia typhi (strain ATCC VR-144 / Wilmington), this protein is Lysine--tRNA ligase.